Reading from the N-terminus, the 150-residue chain is Regulatory protein RecX (150 aa).

It belongs to the RecX family.

Its subcellular location is the cytoplasm. Modulates RecA activity. This is Regulatory protein RecX from Legionella pneumophila (strain Corby).